A 331-amino-acid polypeptide reads, in one-letter code: NADH-cytochrome b5 reductase 2 (331 aa).

A helical transmembrane segment spans residues valine 36–glycine 56. In terms of domain architecture, FAD-binding FR-type spans lysine 80–serine 185. Lysine 188 to leucine 223 provides a ligand contact to FAD.

Belongs to the flavoprotein pyridine nucleotide cytochrome reductase family. The cofactor is FAD.

Its subcellular location is the mitochondrion outer membrane. The catalysed reaction is 2 Fe(III)-[cytochrome b5] + NADH = 2 Fe(II)-[cytochrome b5] + NAD(+) + H(+). Functionally, may mediate the reduction of outer membrane cytochrome b5. This is NADH-cytochrome b5 reductase 2 (MCR1) from Pyricularia oryzae (strain 70-15 / ATCC MYA-4617 / FGSC 8958) (Rice blast fungus).